Here is a 137-residue protein sequence, read N- to C-terminus: Transcription antitermination protein NusB (137 aa).

This sequence belongs to the NusB family.

Its function is as follows. Involved in transcription antitermination. Required for transcription of ribosomal RNA (rRNA) genes. Binds specifically to the boxA antiterminator sequence of the ribosomal RNA (rrn) operons. The protein is Transcription antitermination protein NusB of Clavibacter michiganensis subsp. michiganensis (strain NCPPB 382).